We begin with the raw amino-acid sequence, 971 residues long: Polyamine-modulated factor 1-binding protein 1 (971 aa).

6 coiled-coil regions span residues N37–S69, E117–N229, L282–E325, Q355–Q680, Q706–E827, and I879–T916.

As to expression, expressed in testis and more specifically in ODF, the sperm tail specific cytoskeletal structure. Also expressed in epididymides and brain.

Its subcellular location is the cell projection. The protein localises to the cilium. It localises to the flagellum. Its function is as follows. Required for normal spermatogenesis. It functions as a scaffold protein that attaches the sperm head-tail connecting piece to the nuclear envelope, thus maintaining sperm head and tail integrity. May also be involved in the general organization of cellular cytoskeleton. The protein is Polyamine-modulated factor 1-binding protein 1 (Pmfbp1) of Rattus norvegicus (Rat).